The primary structure comprises 145 residues: Basic phospholipase A2 cL037 (145 aa).

A signal peptide spans 1 to 21 (MYPAHLLVLLAVCVSLLGASA). A propeptide spanning residues 22-27 (ILPLPL) is cleaved from the precursor. 7 disulfide bridges follow: Cys38/Cys98, Cys54/Cys144, Cys56/Cys72, Cys71/Cys125, Cys78/Cys118, Cys87/Cys111, and Cys105/Cys116. Ca(2+) is bound by residues Tyr55, Gly57, and Gly59. His75 is a catalytic residue. A Ca(2+)-binding site is contributed by Asp76. The active site involves Asp119.

It belongs to the phospholipase A2 family. Group I subfamily. D49 sub-subfamily. The cofactor is Ca(2+). In terms of tissue distribution, expressed by the venom gland.

Its subcellular location is the secreted. It carries out the reaction a 1,2-diacyl-sn-glycero-3-phosphocholine + H2O = a 1-acyl-sn-glycero-3-phosphocholine + a fatty acid + H(+). PLA2 catalyzes the calcium-dependent hydrolysis of the 2-acyl groups in 3-sn-phosphoglycerides. The sequence is that of Basic phospholipase A2 cL037 from Laticauda semifasciata (Black-banded sea krait).